Here is an 805-residue protein sequence, read N- to C-terminus: Leucine--tRNA ligase (805 aa).

A 'HIGH' region motif is present at residues 40-51; sequence PYPSGQGLHVGH. Positions 577-581 match the 'KMSKS' region motif; that stretch reads KMSKS. Residue lysine 580 participates in ATP binding.

It belongs to the class-I aminoacyl-tRNA synthetase family.

Its subcellular location is the cytoplasm. The catalysed reaction is tRNA(Leu) + L-leucine + ATP = L-leucyl-tRNA(Leu) + AMP + diphosphate. In Limosilactobacillus fermentum (strain NBRC 3956 / LMG 18251) (Lactobacillus fermentum), this protein is Leucine--tRNA ligase.